The primary structure comprises 171 residues: Endoribonuclease YbeY (171 aa).

3 residues coordinate Zn(2+): H130, H134, and H140.

This sequence belongs to the endoribonuclease YbeY family. It depends on Zn(2+) as a cofactor.

It localises to the cytoplasm. Functionally, single strand-specific metallo-endoribonuclease involved in late-stage 70S ribosome quality control and in maturation of the 3' terminus of the 16S rRNA. This Neisseria meningitidis serogroup A / serotype 4A (strain DSM 15465 / Z2491) protein is Endoribonuclease YbeY.